The chain runs to 371 residues: UDP-N-acetylglucosamine--N-acetylmuramyl-(pentapeptide) pyrophosphoryl-undecaprenol N-acetylglucosamine transferase (371 aa).

Residues 10-12, Asn-124, Arg-166, Ser-196, and Gln-301 contribute to the UDP-N-acetyl-alpha-D-glucosamine site; that span reads TGG.

Belongs to the glycosyltransferase 28 family. MurG subfamily.

Its subcellular location is the cell membrane. The enzyme catalyses di-trans,octa-cis-undecaprenyl diphospho-N-acetyl-alpha-D-muramoyl-L-alanyl-D-glutamyl-meso-2,6-diaminopimeloyl-D-alanyl-D-alanine + UDP-N-acetyl-alpha-D-glucosamine = di-trans,octa-cis-undecaprenyl diphospho-[N-acetyl-alpha-D-glucosaminyl-(1-&gt;4)]-N-acetyl-alpha-D-muramoyl-L-alanyl-D-glutamyl-meso-2,6-diaminopimeloyl-D-alanyl-D-alanine + UDP + H(+). Its pathway is cell wall biogenesis; peptidoglycan biosynthesis. Cell wall formation. Catalyzes the transfer of a GlcNAc subunit on undecaprenyl-pyrophosphoryl-MurNAc-pentapeptide (lipid intermediate I) to form undecaprenyl-pyrophosphoryl-MurNAc-(pentapeptide)GlcNAc (lipid intermediate II). The polypeptide is UDP-N-acetylglucosamine--N-acetylmuramyl-(pentapeptide) pyrophosphoryl-undecaprenol N-acetylglucosamine transferase (Moorella thermoacetica (strain ATCC 39073 / JCM 9320)).